The following is a 110-amino-acid chain: Phosphoribosyl-ATP pyrophosphatase (110 aa).

The protein belongs to the PRA-PH family.

Its subcellular location is the cytoplasm. The enzyme catalyses 1-(5-phospho-beta-D-ribosyl)-ATP + H2O = 1-(5-phospho-beta-D-ribosyl)-5'-AMP + diphosphate + H(+). It participates in amino-acid biosynthesis; L-histidine biosynthesis; L-histidine from 5-phospho-alpha-D-ribose 1-diphosphate: step 2/9. The protein is Phosphoribosyl-ATP pyrophosphatase of Lacticaseibacillus casei (strain BL23) (Lactobacillus casei).